Consider the following 250-residue polypeptide: Tripartite motif-containing protein 73 (250 aa).

The segment at 16-57 adopts an RING-type zinc-finger fold; sequence CPICLEVFKESLMLQCGHSYCKGCLVSLSYHLDTKVRCPMCW. The B box-type zinc finger occupies 84–125; that stretch reads PEPKVCVHHRNPLSLFCEKDQELICGLCGLLGSHQHHPVTPV. Cys-89, His-92, Cys-111, and His-117 together coordinate Zn(2+). 2 coiled-coil regions span residues 125-169 and 204-235; these read VSTV…NESD and LVAS…FGNE.

This sequence belongs to the TRIM/RBCC family.

The polypeptide is Tripartite motif-containing protein 73 (TRIM73) (Homo sapiens (Human)).